The sequence spans 352 residues: MTQISERLLVQAHLDAKQPNPLTAEQEAEYRAAIAAELKAQNAVLVAHYYCDPVIQALAEETGGCVSDSLEMARFGKNHPAETVIVAGVRFMGETAKILTPEKRVLMPTLEATCSLDLGCPVEEFSAFCDQHPERTVVVYANTSAAVKARADWVVTSSCALEIVESLMDNGETIIWGPDQHLGRYIQKQTGADMLLWDGACIVHEEFKSRQLADMKALYPDAAILVHPESPEAVIELADAVGSTSQLIKAAQTLPNKTFIVATDRGIFYKMQQLCPDKEFVEAPTAGNGAACRSCAHCPWMAMNTLERVLDCLRNGTNEIFVDPALVPKAIKPLNRMLDFTQAARLKLSGNA.

Residues H48 and S69 each coordinate iminosuccinate. C114 is a [4Fe-4S] cluster binding site. Iminosuccinate contacts are provided by residues 140–142 and S157; that span reads YAN. C201 contacts [4Fe-4S] cluster. Iminosuccinate is bound by residues 227 to 229 and T244; that span reads HPE. [4Fe-4S] cluster is bound at residue C298.

Belongs to the quinolinate synthase family. Type 1 subfamily. It depends on [4Fe-4S] cluster as a cofactor.

The protein resides in the cytoplasm. It catalyses the reaction iminosuccinate + dihydroxyacetone phosphate = quinolinate + phosphate + 2 H2O + H(+). Its pathway is cofactor biosynthesis; NAD(+) biosynthesis; quinolinate from iminoaspartate: step 1/1. Functionally, catalyzes the condensation of iminoaspartate with dihydroxyacetone phosphate to form quinolinate. In Pseudomonas putida (strain ATCC 700007 / DSM 6899 / JCM 31910 / BCRC 17059 / LMG 24140 / F1), this protein is Quinolinate synthase.